The sequence spans 208 residues: Ribosomal RNA small subunit methyltransferase G (208 aa).

Residues G73, L78, 127 to 128 (VE), and R141 contribute to the S-adenosyl-L-methionine site.

This sequence belongs to the methyltransferase superfamily. RNA methyltransferase RsmG family.

The protein localises to the cytoplasm. It carries out the reaction guanosine(527) in 16S rRNA + S-adenosyl-L-methionine = N(7)-methylguanosine(527) in 16S rRNA + S-adenosyl-L-homocysteine. Its function is as follows. Specifically methylates the N7 position of guanine in position 527 of 16S rRNA. This Cereibacter sphaeroides (strain ATCC 17025 / ATH 2.4.3) (Rhodobacter sphaeroides) protein is Ribosomal RNA small subunit methyltransferase G.